The sequence spans 432 residues: 2-oxoglutarate-dependent dioxygenase AOP2 (432 aa).

A Fe2OG dioxygenase domain is found at 281-378 (SGDDVEANDD…RYTAAIFTCP (98 aa)). The Fe cation site is built by histidine 301, aspartate 303, and histidine 358. Arginine 369 is a 2-oxoglutarate binding site.

It belongs to the iron/ascorbate-dependent oxidoreductase family. It depends on Fe(2+) as a cofactor.

In terms of biological role, 2-oxoglutarate-dependent dioxygenase involved in glucosinolates biosynthesis. Catalyzes the conversion of methylsulfinylalkyl glucosinolates to alkenyl glucosinolates. The protein is 2-oxoglutarate-dependent dioxygenase AOP2 (AOP2) of Arabidopsis thaliana (Mouse-ear cress).